The primary structure comprises 210 residues: Putative protein-lysine deacylase ABHD14B (210 aa).

An N-acetylalanine modification is found at A2. S91 carries the post-translational modification Phosphoserine. Active-site charge relay system residues include S111, D162, and H188.

The protein belongs to the AB hydrolase superfamily. ABHD14 family. As to quaternary structure, may interact with TAF1. Ubiquitous. Detected in spleen, thymus, prostate, testis, ovary, small intestine, colon, peripheral blood leukocyte, heart, placenta, lung, liver, skeletal muscle, pancreas and kidney.

It is found in the cytoplasm. It localises to the nucleus. It catalyses the reaction L-lysyl-[protein] + acetyl-CoA = N(6)-acetyl-L-lysyl-[protein] + CoA + H(+). Acts as an atypical protein-lysine deacetylase in vitro. Catalyzes the deacetylation of lysine residues using CoA as substrate, generating acetyl-CoA and the free amine of protein-lysine residues. Additional experiments are however required to confirm the protein-lysine deacetylase activity in vivo. Has hydrolase activity towards various surrogate p-nitrophenyl (pNp) substrates, such as pNp-butyrate, pNp-acetate and pNp-octanoate in vitro, with a strong preference for pNp-acetate. May activate transcription. This chain is Putative protein-lysine deacylase ABHD14B, found in Homo sapiens (Human).